The chain runs to 60 residues: Cytotoxin 10 (60 aa).

4 disulfide bridges follow: Cys-3–Cys-21, Cys-14–Cys-38, Cys-42–Cys-53, and Cys-54–Cys-59.

It belongs to the three-finger toxin family. Short-chain subfamily. Type IA cytotoxin sub-subfamily. In terms of assembly, monomer in solution; Homodimer and oligomer in the presence of negatively charged lipids forming a pore with a size ranging between 20 and 30 Angstroms. As to expression, expressed by the venom gland.

The protein localises to the secreted. The protein resides in the target cell membrane. In terms of biological role, shows cytolytic activity on many different cells by forming pore in lipid membranes. In vivo, increases heart rate or kills the animal by cardiac arrest. In addition, it binds to heparin with high affinity, interacts with Kv channel-interacting protein 1 (KCNIP1) in a calcium-independent manner, and binds to integrin alpha-V/beta-3 (ITGAV/ITGB3) with moderate affinity. This Naja annulifera (Banded Egyptian cobra) protein is Cytotoxin 10.